A 174-amino-acid chain; its full sequence is MTSTVNLGSDTASKRTVIKSRCNSCCRILVSCVAVICAILALIFLVATIGLSVKLAFTVQEVHNCKQKLSGASTTTAAIYTTPSTMIEALQTNQLKLTTNERRSTPPDCLVEKKLCEGEVRYLKTKGCLGAREGEDLNCIDLVVECVGKPCGHNEDYKECICTNNGTATKCCYN.

The chain crosses the membrane as a helical span at residues 33–53 (VAVICAILALIFLVATIGLSV). N165 is a glycosylation site (N-linked (GlcNAc...) asparagine; by host).

Its subcellular location is the membrane. This Meleagris gallopavo (Wild turkey) protein is Small hydrophobic protein (SH).